The chain runs to 347 residues: A-type ATP synthase subunit C (347 aa).

Belongs to the V-ATPase V0D/AC39 subunit family. As to quaternary structure, has multiple subunits with at least A(3), B(3), C, D, E, F, H, I and proteolipid K(x).

The protein localises to the cell membrane. In terms of biological role, component of the A-type ATP synthase that produces ATP from ADP in the presence of a proton gradient across the membrane. The polypeptide is A-type ATP synthase subunit C (Haloquadratum walsbyi (strain DSM 16790 / HBSQ001)).